The sequence spans 451 residues: Glycine--tRNA ligase (451 aa).

Residues R99 and E168 each contribute to the substrate site. ATP contacts are provided by residues 200-202, 210-215, 284-285, and 328-331; these read RNE, FRTREF, EL, and GLDR. Residue 215–219 participates in substrate binding; sequence FEQME. Substrate is bound at residue 324–328; it reads EPSVG.

It belongs to the class-II aminoacyl-tRNA synthetase family. In terms of assembly, homodimer.

Its subcellular location is the cytoplasm. It catalyses the reaction tRNA(Gly) + glycine + ATP = glycyl-tRNA(Gly) + AMP + diphosphate. Its function is as follows. Catalyzes the attachment of glycine to tRNA(Gly). In Mycoplasmopsis synoviae (strain 53) (Mycoplasma synoviae), this protein is Glycine--tRNA ligase.